The sequence spans 341 residues: L-threonine 3-dehydrogenase (341 aa).

Position 38 (cysteine 38) interacts with Zn(2+). Active-site charge relay system residues include threonine 40 and histidine 43. Residues histidine 63, glutamate 64, cysteine 93, cysteine 96, cysteine 99, and cysteine 107 each contribute to the Zn(2+) site. Residues isoleucine 175, aspartate 195, arginine 200, 262–264 (LGI), and 286–287 (IY) each bind NAD(+).

It belongs to the zinc-containing alcohol dehydrogenase family. Homotetramer. It depends on Zn(2+) as a cofactor.

Its subcellular location is the cytoplasm. The enzyme catalyses L-threonine + NAD(+) = (2S)-2-amino-3-oxobutanoate + NADH + H(+). It functions in the pathway amino-acid degradation; L-threonine degradation via oxydo-reductase pathway; glycine from L-threonine: step 1/2. In terms of biological role, catalyzes the NAD(+)-dependent oxidation of L-threonine to 2-amino-3-ketobutyrate. This is L-threonine 3-dehydrogenase from Alteromonas mediterranea (strain DSM 17117 / CIP 110805 / LMG 28347 / Deep ecotype).